The chain runs to 87 residues: Large ribosomal subunit protein bL27 (87 aa).

The disordered stretch occupies residues 1-25; that stretch reads MAHKKGASSSRNGRDSNAQRLGVKR. A compositionally biased stretch (polar residues) spans 7 to 19; the sequence is ASSSRNGRDSNAQ.

Belongs to the bacterial ribosomal protein bL27 family.

This is Large ribosomal subunit protein bL27 from Rhodococcus jostii (strain RHA1).